The chain runs to 338 residues: Ketol-acid reductoisomerase (NADP(+)) (338 aa).

In terms of domain architecture, KARI N-terminal Rossmann spans 3–183; it reads IELLYDADAD…GGARAGVIPT (181 aa). Residues 26 to 29, Arg-49, Ser-52, Ser-54, and 84 to 87 contribute to the NADP(+) site; these read YGSQ and DTSQ. His-109 is a catalytic residue. An NADP(+)-binding site is contributed by Gly-135. The KARI C-terminal knotted domain maps to 184–329; it reads TFEAETVTDL…AKLRDLMSWV (146 aa). Positions 192, 196, 228, and 232 each coordinate Mg(2+). Ser-253 serves as a coordination point for substrate.

The protein belongs to the ketol-acid reductoisomerase family. Mg(2+) serves as cofactor.

It catalyses the reaction (2R)-2,3-dihydroxy-3-methylbutanoate + NADP(+) = (2S)-2-acetolactate + NADPH + H(+). The catalysed reaction is (2R,3R)-2,3-dihydroxy-3-methylpentanoate + NADP(+) = (S)-2-ethyl-2-hydroxy-3-oxobutanoate + NADPH + H(+). Its pathway is amino-acid biosynthesis; L-isoleucine biosynthesis; L-isoleucine from 2-oxobutanoate: step 2/4. The protein operates within amino-acid biosynthesis; L-valine biosynthesis; L-valine from pyruvate: step 2/4. Involved in the biosynthesis of branched-chain amino acids (BCAA). Catalyzes an alkyl-migration followed by a ketol-acid reduction of (S)-2-acetolactate (S2AL) to yield (R)-2,3-dihydroxy-isovalerate. In the isomerase reaction, S2AL is rearranged via a Mg-dependent methyl migration to produce 3-hydroxy-3-methyl-2-ketobutyrate (HMKB). In the reductase reaction, this 2-ketoacid undergoes a metal-dependent reduction by NADPH to yield (R)-2,3-dihydroxy-isovalerate. In Corynebacterium glutamicum (strain ATCC 13032 / DSM 20300 / JCM 1318 / BCRC 11384 / CCUG 27702 / LMG 3730 / NBRC 12168 / NCIMB 10025 / NRRL B-2784 / 534), this protein is Ketol-acid reductoisomerase (NADP(+)).